The following is a 1276-amino-acid chain: Probable histone acetyltransferase HAC-like 3 (1276 aa).

Residues 391-421 (VDRAEQTSNSTVSKPTSPASDGSSGKHYPAK) form a disordered region. Residues 396–413 (QTSNSTVSKPTSPASDGS) show a composition bias toward polar residues. The PHD-type zinc finger occupies 621–689 (SSICGRCHHL…EYTCAKCFLK (69 aa)). Residues 704-1130 (ILGARELPRT…ILYHLHDSTC (427 aa)) enclose the CBP/p300-type HAT domain. Acetyl-CoA contacts are provided by residues 827–829 (IDS), 846–847 (RT), and Trp-902. A coiled-coil region spans residues 953-973 (EAERLLEKKDDDTSQKKETQL). 2 ZZ-type zinc fingers span residues 1013 to 1076 (CLQQ…EEPL) and 1125 to 1187 (LHDS…LQDY). Cys-1018, Cys-1021, Cys-1033, Cys-1036, Cys-1042, Cys-1045, His-1058, His-1066, Cys-1130, Cys-1133, Cys-1145, Cys-1148, Cys-1154, Cys-1157, His-1168, and His-1177 together coordinate Zn(2+). A TAZ-type zinc finger spans residues 1177–1260 (HVLQKYTLQD…DCSAPRCRDI (84 aa)).

The protein localises to the nucleus. The enzyme catalyses L-lysyl-[protein] + acetyl-CoA = N(6)-acetyl-L-lysyl-[protein] + CoA + H(+). Its function is as follows. Acetyltransferase enzyme. Acetylates histones, giving a specific tag for transcriptional activation. This Oryza sativa subsp. japonica (Rice) protein is Probable histone acetyltransferase HAC-like 3.